The chain runs to 185 residues: Ribosome-recycling factor (185 aa).

It belongs to the RRF family.

It localises to the cytoplasm. Responsible for the release of ribosomes from messenger RNA at the termination of protein biosynthesis. May increase the efficiency of translation by recycling ribosomes from one round of translation to another. This is Ribosome-recycling factor from Myxococcus xanthus (strain DK1622).